The chain runs to 638 residues: Keratin, type II cytoskeletal 2 oral (638 aa).

A head region spans residues 1–182 (MNRQVCKKSF…DPQIGQVKAQ (182 aa)). R85 and R110 each carry omega-N-methylarginine. The tract at residues 183 to 218 (EREQIKTLNNKFASFIDKVRFLEQQNKVLETKWELL) is coil 1A. The region spanning 183-496 (EREQIKTLNN…KLLEGEECRM (314 aa)) is the IF rod domain. Positions 219-237 (QQQTTGSGPSSLEPCFESY) are linker 1. The tract at residues 238–329 (ISFLCKQLDS…TLYEMELSQM (92 aa)) is coil 1B. Residues 330 to 353 (QSHASDTSVVLSMDNNRCLDLGSI) form a linker 12 region. The tract at residues 354–492 (IAEVRAQYEE…ATYRKLLEGE (139 aa)) is coil 2. The segment at 493-638 (ECRMSGECQS…TSSSQHSSTK (146 aa)) is tail. Positions 532-638 (SGSGGYKGGS…TSSSQHSSTK (107 aa)) are disordered. Over residues 540–549 (GSSSSSSSGY) the composition is skewed to low complexity. Positions 550–572 (GVSGGSGSGYGGVSSGSTGGRGS) are enriched in gly residues. Over residues 573 to 583 (SGSYQSSSSGS) the composition is skewed to low complexity. The residue at position 584 (R584) is an Omega-N-methylarginine. A compositionally biased stretch (low complexity) spans 590–608 (SISVSHSGMGSSSGSIQTS). Residues 609–620 (GGSGYKSGGGGS) are compositionally biased toward gly residues. Over residues 626–638 (SQTTSSSQHSSTK) the composition is skewed to low complexity.

This sequence belongs to the intermediate filament family. Heterotetramer of two type I and two type II keratins.

In terms of biological role, probably contributes to terminal cornification. The chain is Keratin, type II cytoskeletal 2 oral (KRT76) from Homo sapiens (Human).